A 282-amino-acid polypeptide reads, in one-letter code: B3 domain-containing protein At5g06250 (282 aa).

Residues 46 to 159 (FEKSLTPSDV…RLFIGWRRRG (114 aa)) constitute a DNA-binding region (TF-B3).

The protein resides in the nucleus. This Arabidopsis thaliana (Mouse-ear cress) protein is B3 domain-containing protein At5g06250.